The chain runs to 704 residues: Non-sulfated chondroitin lyase E66 (704 aa).

The signal sequence occupies residues 1 to 23 (MSIVLIIVIVVIFLICFLYLSNS). Residues asparagine 236 and histidine 291 each act as proton acceptor in the active site. Tyrosine 299 acts as the Proton donor in catalysis.

It belongs to the baculoviridae E66 family.

It localises to the virion membrane. The protein localises to the host nucleus. It is found in the host cytoplasm. Component of the polyhedra envelope. Plays an essential role in oral infectivity. May digest, with its chondroitin lyase activity, the chondroitin sulfate barrier of the peritrophic matrix of the host midgut to facilitate viral infection in the epithelial cells. This chain is Non-sulfated chondroitin lyase E66 (P79), found in Lepidoptera (butterflies and moths).